The chain runs to 361 residues: UDP-N-acetylglucosamine--N-acetylmuramyl-(pentapeptide) pyrophosphoryl-undecaprenol N-acetylglucosamine transferase (361 aa).

UDP-N-acetyl-alpha-D-glucosamine is bound by residues 21 to 23, Asn131, Arg172, Ser195, Ile250, and Gln295; that span reads TGG.

Belongs to the glycosyltransferase 28 family. MurG subfamily.

The protein localises to the cell inner membrane. It carries out the reaction di-trans,octa-cis-undecaprenyl diphospho-N-acetyl-alpha-D-muramoyl-L-alanyl-D-glutamyl-meso-2,6-diaminopimeloyl-D-alanyl-D-alanine + UDP-N-acetyl-alpha-D-glucosamine = di-trans,octa-cis-undecaprenyl diphospho-[N-acetyl-alpha-D-glucosaminyl-(1-&gt;4)]-N-acetyl-alpha-D-muramoyl-L-alanyl-D-glutamyl-meso-2,6-diaminopimeloyl-D-alanyl-D-alanine + UDP + H(+). It functions in the pathway cell wall biogenesis; peptidoglycan biosynthesis. Its function is as follows. Cell wall formation. Catalyzes the transfer of a GlcNAc subunit on undecaprenyl-pyrophosphoryl-MurNAc-pentapeptide (lipid intermediate I) to form undecaprenyl-pyrophosphoryl-MurNAc-(pentapeptide)GlcNAc (lipid intermediate II). This Solibacter usitatus (strain Ellin6076) protein is UDP-N-acetylglucosamine--N-acetylmuramyl-(pentapeptide) pyrophosphoryl-undecaprenol N-acetylglucosamine transferase.